We begin with the raw amino-acid sequence, 374 residues long: GTPase Obg (374 aa).

Positions 1–159 constitute an Obg domain; the sequence is MKFIDEVRIH…RDLRLELRLL (159 aa). One can recognise an OBG-type G domain in the interval 160 to 333; sequence ADVGLLGLPN…LVYAIWQALP (174 aa). Residues 166-173, 191-195, 213-216, 283-286, and 314-316 each bind GTP; these read GLPNAGKS, FTTLY, DIPG, NKSD, and SAA. The Mg(2+) site is built by serine 173 and threonine 193. Residues 337–374 are disordered; that stretch reads PAADPTQTEDWGDESDAGERLENWEGDDLDADWEEEQV. Residues 360 to 374 show a composition bias toward acidic residues; it reads WEGDDLDADWEEEQV.

It belongs to the TRAFAC class OBG-HflX-like GTPase superfamily. OBG GTPase family. As to quaternary structure, monomer. Mg(2+) serves as cofactor.

It localises to the cytoplasm. Functionally, an essential GTPase which binds GTP, GDP and possibly (p)ppGpp with moderate affinity, with high nucleotide exchange rates and a fairly low GTP hydrolysis rate. Plays a role in control of the cell cycle, stress response, ribosome biogenesis and in those bacteria that undergo differentiation, in morphogenesis control. This is GTPase Obg from Acidithiobacillus ferrooxidans (strain ATCC 23270 / DSM 14882 / CIP 104768 / NCIMB 8455) (Ferrobacillus ferrooxidans (strain ATCC 23270)).